Reading from the N-terminus, the 178-residue chain is Cytidylate kinase (178 aa).

ATP is bound at residue 7–15 (GLPGTGTTT).

Belongs to the cytidylate kinase family. Type 2 subfamily.

It localises to the cytoplasm. It catalyses the reaction CMP + ATP = CDP + ADP. The catalysed reaction is dCMP + ATP = dCDP + ADP. This chain is Cytidylate kinase, found in Methanococcus maripaludis (strain C7 / ATCC BAA-1331).